Reading from the N-terminus, the 566-residue chain is Glucose-6-phosphate isomerase, cytosolic (566 aa).

E360 functions as the Proton donor in the catalytic mechanism. Catalysis depends on residues H391 and K516.

The protein belongs to the GPI family. As to quaternary structure, homodimer.

It is found in the cytoplasm. The enzyme catalyses alpha-D-glucose 6-phosphate = beta-D-fructose 6-phosphate. The protein operates within carbohydrate degradation; glycolysis; D-glyceraldehyde 3-phosphate and glycerone phosphate from D-glucose: step 2/4. This Spinacia oleracea (Spinach) protein is Glucose-6-phosphate isomerase, cytosolic (PGIC).